Reading from the N-terminus, the 124-residue chain is Large ribosomal subunit protein bL12 (124 aa).

It belongs to the bacterial ribosomal protein bL12 family. In terms of assembly, homodimer. Part of the ribosomal stalk of the 50S ribosomal subunit. Forms a multimeric L10(L12)X complex, where L10 forms an elongated spine to which 2 to 4 L12 dimers bind in a sequential fashion. Binds GTP-bound translation factors.

Functionally, forms part of the ribosomal stalk which helps the ribosome interact with GTP-bound translation factors. Is thus essential for accurate translation. The protein is Large ribosomal subunit protein bL12 of Xanthobacter autotrophicus (strain ATCC BAA-1158 / Py2).